Consider the following 259-residue polypeptide: Imidazole glycerol phosphate synthase subunit HisF (259 aa).

Residues aspartate 11 and aspartate 130 contribute to the active site.

It belongs to the HisA/HisF family. Heterodimer of HisH and HisF.

The protein resides in the cytoplasm. The catalysed reaction is 5-[(5-phospho-1-deoxy-D-ribulos-1-ylimino)methylamino]-1-(5-phospho-beta-D-ribosyl)imidazole-4-carboxamide + L-glutamine = D-erythro-1-(imidazol-4-yl)glycerol 3-phosphate + 5-amino-1-(5-phospho-beta-D-ribosyl)imidazole-4-carboxamide + L-glutamate + H(+). Its pathway is amino-acid biosynthesis; L-histidine biosynthesis; L-histidine from 5-phospho-alpha-D-ribose 1-diphosphate: step 5/9. Functionally, IGPS catalyzes the conversion of PRFAR and glutamine to IGP, AICAR and glutamate. The HisF subunit catalyzes the cyclization activity that produces IGP and AICAR from PRFAR using the ammonia provided by the HisH subunit. In Acidovorax ebreus (strain TPSY) (Diaphorobacter sp. (strain TPSY)), this protein is Imidazole glycerol phosphate synthase subunit HisF.